The primary structure comprises 150 residues: UPF0260 protein PP_4587 (150 aa).

Belongs to the UPF0260 family.

The sequence is that of UPF0260 protein PP_4587 from Pseudomonas putida (strain ATCC 47054 / DSM 6125 / CFBP 8728 / NCIMB 11950 / KT2440).